Consider the following 840-residue polypeptide: Leucine--tRNA ligase (840 aa).

A 'HIGH' region motif is present at residues 44–55; it reads PYPSANGLHVGH. Residues 617-621 carry the 'KMSKS' region motif; it reads KMSKS. Position 620 (lysine 620) interacts with ATP.

The protein belongs to the class-I aminoacyl-tRNA synthetase family.

The protein localises to the cytoplasm. The enzyme catalyses tRNA(Leu) + L-leucine + ATP = L-leucyl-tRNA(Leu) + AMP + diphosphate. This is Leucine--tRNA ligase from Borreliella burgdorferi (strain ZS7) (Borrelia burgdorferi).